A 252-amino-acid chain; its full sequence is Hydroxyacylglutathione hydrolase (252 aa).

Positions 52, 54, 56, 57, 107, 128, and 166 each coordinate Zn(2+).

This sequence belongs to the metallo-beta-lactamase superfamily. Glyoxalase II family. As to quaternary structure, monomer. Zn(2+) is required as a cofactor.

The enzyme catalyses an S-(2-hydroxyacyl)glutathione + H2O = a 2-hydroxy carboxylate + glutathione + H(+). The protein operates within secondary metabolite metabolism; methylglyoxal degradation; (R)-lactate from methylglyoxal: step 2/2. Functionally, thiolesterase that catalyzes the hydrolysis of S-D-lactoyl-glutathione to form glutathione and D-lactic acid. The chain is Hydroxyacylglutathione hydrolase from Neisseria meningitidis serogroup C (strain 053442).